We begin with the raw amino-acid sequence, 209 residues long: MFKFLKQVSDYAKETFQSAKYIGQGLSVTFDHMSRRPVTVQYPYEKLIPSERFRGRIHFEYDKCIACEVCVRVCPINLPVVDWEFNKETKKKKLKHYSIDFGVCIFCGNCVEYCPSNCLSMTEEYELAAYDRHELNYDNVALGRLPYKVTNDPMVTPMRELAYLPKGVIDPHTVPHTSRRAGLRPEEILEQIEAEKTAAEKTAAEITDK.

4Fe-4S ferredoxin-type domains lie at 55 to 84 (GRIHFEYDKCIACEVCVRVCPINLPVVDWE) and 95 to 124 (KHYSIDFGVCIFCGNCVEYCPSNCLSMTEE). Residues cysteine 64, cysteine 67, cysteine 70, cysteine 74, cysteine 104, cysteine 107, cysteine 110, and cysteine 114 each contribute to the [4Fe-4S] cluster site.

Belongs to the complex I 23 kDa subunit family. As to quaternary structure, NDH-1 is composed of at least 11 different subunits. It depends on [4Fe-4S] cluster as a cofactor.

Its subcellular location is the cellular thylakoid membrane. The catalysed reaction is a plastoquinone + NADH + (n+1) H(+)(in) = a plastoquinol + NAD(+) + n H(+)(out). The enzyme catalyses a plastoquinone + NADPH + (n+1) H(+)(in) = a plastoquinol + NADP(+) + n H(+)(out). In terms of biological role, NDH-1 shuttles electrons from an unknown electron donor, via FMN and iron-sulfur (Fe-S) centers, to quinones in the respiratory and/or the photosynthetic chain. The immediate electron acceptor for the enzyme in this species is believed to be plastoquinone. Couples the redox reaction to proton translocation, and thus conserves the redox energy in a proton gradient. The chain is NAD(P)H-quinone oxidoreductase subunit I from Trichodesmium erythraeum (strain IMS101).